The sequence spans 336 residues: Tryptophan--tRNA ligase (336 aa).

ATP contacts are provided by residues 9–11 (QPS) and 17–18 (GN). Positions 10–18 (PSGTPTIGN) match the 'HIGH' region motif. Asp134 is an L-tryptophan binding site. ATP-binding positions include 146–148 (GDD), Ile189, and 198–202 (KMSKS). Residues 198–202 (KMSKS) carry the 'KMSKS' region motif.

Belongs to the class-I aminoacyl-tRNA synthetase family. In terms of assembly, homodimer.

It localises to the cytoplasm. The catalysed reaction is tRNA(Trp) + L-tryptophan + ATP = L-tryptophyl-tRNA(Trp) + AMP + diphosphate + H(+). Functionally, catalyzes the attachment of tryptophan to tRNA(Trp). The protein is Tryptophan--tRNA ligase of Enterococcus faecalis (strain ATCC 700802 / V583).